Here is a 107-residue protein sequence, read N- to C-terminus: Nucleoid-associated protein PHZ_c0369 (107 aa).

The protein belongs to the YbaB/EbfC family. In terms of assembly, homodimer.

It localises to the cytoplasm. The protein resides in the nucleoid. Its function is as follows. Binds to DNA and alters its conformation. May be involved in regulation of gene expression, nucleoid organization and DNA protection. The protein is Nucleoid-associated protein PHZ_c0369 of Phenylobacterium zucineum (strain HLK1).